The primary structure comprises 223 residues: DNA-directed RNA polymerase III subunit RPC7 (223 aa).

The interval 110-223 (MMPRNKCKKA…SDDNMDEATY (114 aa)) is disordered. Residues 114–125 (NKCKKAGPKPKK) show a composition bias toward basic residues. Threonine 133 is modified (phosphothreonine). Basic and acidic residues predominate over residues 140–155 (DVLKKMEELEKRGDGE). Serine 157 carries the post-translational modification Phosphoserine. Basic and acidic residues predominate over residues 164-173 (KEGSKEKSKE). Acidic residues-rich tracts occupy residues 174-198 (GDDD…EEND) and 205-223 (EDGD…EATY).

This sequence belongs to the eukaryotic RPC7 RNA polymerase subunit family. In terms of assembly, component of the RNA polymerase III complex consisting of 17 subunits: a ten-subunit horseshoe-shaped catalytic core composed of POLR3A/RPC1, POLR3B/RPC2, POLR1C/RPAC1, POLR1D/RPAC2, POLR3K/RPC10, POLR2E/RPABC1, POLR2F/RPABC2, POLR2H/RPABC3, POLR2K/RPABC4 and POLR2L/RPABC5; a mobile stalk composed of two subunits POLR3H/RPC8 and CRCP/RPC9, protruding from the core and functioning primarily in transcription initiation; and additional subunits homologous to general transcription factors of the RNA polymerase II machinery, POLR3C/RPC3-POLR3F/RPC6-POLR3G/RPC7 heterotrimer required for transcription initiation and POLR3D/RPC4-POLR3E/RPC5 heterodimer involved in both transcription initiation and termination. Directly interacts with POLR3C/RPC62. Also found in a trimeric complex with POLR3C/RPC3 and POLR3GL. As to expression, barely detectable in differentiated tissues. Expressed in embryonic stem cells and in other dividing cells, such as some tumor cell lines.

It is found in the nucleus. The protein localises to the cytoplasm. Functionally, DNA-dependent RNA polymerase catalyzes the transcription of DNA into RNA using the four ribonucleoside triphosphates as substrates. Specific peripheric component of RNA polymerase III (Pol III) which synthesizes small non-coding RNAs including 5S rRNA, snRNAs, tRNAs and miRNAs from at least 500 distinct genomic loci. Acts as a long tether that bridges POLR3C/RPC3-POLR3F/RPC6-POLR3G/RPC7 heterotrimer and the mobile stalk of Pol III, coordinating the dynamics of Pol III stalk and clamp modules during the transition from apo to elongation state. Pol III exists as two alternative complexes defined by the mutually exclusive incorporation of subunit POLR3G/RPC7alpha or POLR3GL/RPC7beta. POLR3G/RPC7alpha modulates Pol III transcriptome by specifically enhancing the transcription of snaR-A non-coding RNAs. At resting state, occupies the active site of apo Pol III and keeps Pol III in an autoinhibitory mode, preventing non-specific transcription. Pol III plays a key role in sensing and limiting infection by intracellular bacteria and DNA viruses. Acts as a nuclear and cytosolic DNA sensor involved in innate immune response. Can sense non-self dsDNA that serves as template for transcription into dsRNA. The non-self RNA polymerase III transcripts, such as Epstein-Barr virus-encoded RNAs (EBERs), induce type I interferon and NF-kappa-B through the RIG-I pathway. This is DNA-directed RNA polymerase III subunit RPC7 from Homo sapiens (Human).